A 140-amino-acid polypeptide reads, in one-letter code: Large ribosomal subunit protein bL17 (140 aa).

This sequence belongs to the bacterial ribosomal protein bL17 family. In terms of assembly, part of the 50S ribosomal subunit. Contacts protein L32.

This Paramagnetospirillum magneticum (strain ATCC 700264 / AMB-1) (Magnetospirillum magneticum) protein is Large ribosomal subunit protein bL17.